A 211-amino-acid polypeptide reads, in one-letter code: Thymidylate kinase (211 aa).

Residue 10–17 (GIDGSGKT) coordinates ATP.

Belongs to the thymidylate kinase family.

It catalyses the reaction dTMP + ATP = dTDP + ADP. In terms of biological role, phosphorylation of dTMP to form dTDP in both de novo and salvage pathways of dTTP synthesis. The sequence is that of Thymidylate kinase from Prochlorococcus marinus (strain NATL1A).